The following is a 67-amino-acid chain: Large ribosomal subunit protein uL29 (67 aa).

Belongs to the universal ribosomal protein uL29 family.

The protein is Large ribosomal subunit protein uL29 of Clostridioides difficile (strain 630) (Peptoclostridium difficile).